The following is a 1350-amino-acid chain: uncharacterized protein (1350 aa).

Disordered regions lie at residues 348-371 and 923-944; these read SLVG…LDDS and SKME…RGTG. Over residues 923–932 the composition is skewed to basic and acidic residues; the sequence is SKMEGGERDA.

This is an uncharacterized protein from Ictalurid herpesvirus 1 (strain Auburn) (IcHV-1).